The chain runs to 276 residues: Src-like-adapter (276 aa).

Gly-2 carries N-myristoyl glycine lipidation. The 61-residue stretch at 22-82 (LDSDFLAVLS…PGICVARVYH (61 aa)) folds into the SH3 domain. Residues 84 to 175 (WLFEGLGRDK…GLCCVLTTPC (92 aa)) form the SH2 domain. Residues 212–276 (EGTENPLGVD…FFSSPPYFED (65 aa)) form an SLA C-terminal region. Phosphoserine is present on Ser-253. Position 273 is a phosphotyrosine (Tyr-273).

In terms of assembly, interacts with EPHA2, VAV1, LCP2 and PDGFRB. Homodimer. Homodimerization and interaction with phosphorylated CBL occurs via its C-terminal domain. Interacts with phosphorylated proteins ZAP70, CD3Z, SYK and LAT via its SH2 domain. Expressed in lung and fetal brain. Weakly expressed in heart, adult brain, placenta, liver, skeletal muscle, kidney and pancreas.

It is found in the cytoplasm. Its subcellular location is the endosome. In terms of biological role, adapter protein, which negatively regulates T-cell receptor (TCR) signaling. Inhibits T-cell antigen-receptor induced activation of nuclear factor of activated T-cells. Involved in the negative regulation of positive selection and mitosis of T-cells. May act by linking signaling proteins such as ZAP70 with CBL, leading to a CBL dependent degradation of signaling proteins. The polypeptide is Src-like-adapter (SLA) (Homo sapiens (Human)).